The primary structure comprises 86 residues: Cell division topological specificity factor (86 aa).

The protein belongs to the MinE family.

In terms of biological role, prevents the cell division inhibition by proteins MinC and MinD at internal division sites while permitting inhibition at polar sites. This ensures cell division at the proper site by restricting the formation of a division septum at the midpoint of the long axis of the cell. The sequence is that of Cell division topological specificity factor from Shewanella sediminis (strain HAW-EB3).